A 317-amino-acid polypeptide reads, in one-letter code: MSMRATFLGTGGAVPTTARAPSAFLVNRDGERLLFDCGEGTQRQMMRYGTGFGVSHLFVTHLHGDHILGIPGLIQTLDFNDRDDSLAIHGPPGSKGHLEQLVHAGGYQPGFHVSVHEVRPGNVAYRADDYEVRAFDTEHRTASVGYALVEDDRPGRFDREKAEELGVPVGPAFGRLHAGEDVELEDGTVVRSEQVVGDPRPGRTVVYTGDTRPLNSTVEVACDADLLVHDATFTDEEAERAKQTAHSTAREAARVARDADVRRFALTHISARYAADPSPLLEQAREVYDGEAFVAEDGQKLEVPYADSDGGGAETGE.

Zn(2+)-binding residues include His-61, His-63, Asp-65, His-66, His-139, Asp-210, and His-268. Asp-65 serves as the catalytic Proton acceptor.

It belongs to the RNase Z family. Homodimer. Zn(2+) is required as a cofactor.

The enzyme catalyses Endonucleolytic cleavage of RNA, removing extra 3' nucleotides from tRNA precursor, generating 3' termini of tRNAs. A 3'-hydroxy group is left at the tRNA terminus and a 5'-phosphoryl group is left at the trailer molecule.. Its activity is regulated as follows. Inhibited by high salt concentrations. In terms of biological role, zinc phosphodiesterase, which displays some tRNA 3'-processing endonuclease activity. Probably involved in tRNA maturation, by removing a 3'-trailer from precursor tRNA. Can also catalyze the 5' end cleavage of the 5S rRNA. The polypeptide is Ribonuclease Z (Haloferax volcanii (strain ATCC 29605 / DSM 3757 / JCM 8879 / NBRC 14742 / NCIMB 2012 / VKM B-1768 / DS2) (Halobacterium volcanii)).